The following is a 61-amino-acid chain: Lens epithelial cell protein LEP503 (61 aa).

In Mus musculus (Mouse), this protein is Lens epithelial cell protein LEP503 (Lenep).